Reading from the N-terminus, the 404-residue chain is Keratin, type I cuticular Ha3-II (404 aa).

A head region spans residues 1–56; sequence MPYNFCLPSLSCRTSCSSRPCVPPSCHGYTLPGACNIPANVSNCNWFCEGSFNGSE. The IF rod domain occupies 56–367; sequence EKETMQFLND…SLLESEDCKL (312 aa). Residues 57 to 91 are coil 1A; sequence KETMQFLNDRLASYLEKVRQLERDNAELENLIRER. A linker 1 region spans residues 92–102; it reads SQQQEPLLCPS. The coil 1B stretch occupies residues 103 to 203; sequence YQSYFKTIEE…HEQEVNTLRC (101 aa). The segment at 204–219 is linker 12; that stretch reads QLGDRLNVEVDAAPAV. A coil 2 region spans residues 220–363; sequence DLNQVLNETR…NTYRSLLESE (144 aa). The segment at 364–404 is tail; sequence DCKLPSNPCATTNACEKPIGSCVTNPCGPRSRCGPCNTFGY.

The protein belongs to the intermediate filament family.

In Homo sapiens (Human), this protein is Keratin, type I cuticular Ha3-II (KRT33B).